A 229-amino-acid polypeptide reads, in one-letter code: Ribonuclease S-6 (229 aa).

The N-terminal stretch at 1-27 (MGITGMIYMVPMVFSLIVLISCSSTMG) is a signal peptide. RNA is bound at residue Q36. C42 and C49 are joined by a disulfide. H60 serves as a coordination point for RNA. The active-site Proton donor is H60. Residues C75 and C119 are joined by a disulfide bond. 2 N-linked (GlcNAc) asparagine glycosylation sites follow: N77 and N87. RNA is bound by residues 98-99 (NV), F108, 111-112 (RQ), and 115-116 (KH). Residue Q112 is part of the active site. Catalysis depends on H116, which acts as the Proton acceptor. N-linked (GlcNAc...) (high mannose) asparagine glycosylation is present at N145. Intrachain disulfides connect C184/C222 and C199/C210. N188 carries N-linked (GlcNAc) asparagine; alternate glycosylation. N-linked (GlcNAc...) asparagine; alternate glycans are attached at residues N188 and N203.

It belongs to the RNase T2 family. In terms of processing, the N-glycans attached at Asn-188 and Asn-203 consist of either monosaccharide (GlcNAc) or disaccharide (GlcNAc-GlcNAc) that could not be distinguished.

It catalyses the reaction a ribonucleotidyl-ribonucleotide-RNA + H2O = a 3'-end 3'-phospho-ribonucleotide-RNA + a 5'-end dephospho-ribonucleoside-RNA + H(+). In terms of biological role, self-incompatibility (SI) is the inherited ability of a flowering plant to prevent self-fertilization by discriminating between self and non-self pollen during pollination. In many species, self-incompatibility is controlled by the single, multiallelic locus S. The polypeptide is Ribonuclease S-6 (Pyrus pyrifolia (Chinese pear)).